A 623-amino-acid chain; its full sequence is Protein skinhead-1 (623 aa).

4 disordered regions span residues 1 to 29 (MGGSSRRQRSTSATRRDDKRRRRQCFSSV), 158 to 184 (TEHPPASPFGRGPSTERPTTSSRYEYS), 421 to 451 (YQSTGQTPLSPLIIGSSGRQQQTQTSPGSVT), and 467 to 557 (QRHS…LASD). Serine 164 is modified (phosphoserine; by pmk-1). A compositionally biased stretch (polar residues) spans 173–184 (ERPTTSSRYEYS). The residue at position 430 (serine 430) is a Phosphoserine; by pmk-1. 3 stretches are compositionally biased toward low complexity: residues 435–449 (GSSGRQQQTQTSPGS), 472–498 (SDCTTDSSSTCSRLSSESPRYTSESST), and 511–529 (PSSGSRYQRSSSPRSSQSS). Positions 540 to 623 (SGQRKRGRQS…DRHDKMSHYI (84 aa)) are basic motif.

It belongs to the bZIP family. Skn1 subfamily. As to quaternary structure, monomer. Interacts with GATA factor elt-3; interaction may enhance transcriptional activation of target genes. In terms of assembly, interacts with pgma-5. Interacts with transcription factor mxl-3 (via N-terminus). Cleaved by the aspartic protease ddi-1. In terms of tissue distribution, postembryonic intestinal cells.

Its subcellular location is the nucleus. The protein localises to the cytoplasm. The protein resides in the mitochondrion. Its function is as follows. Transcription factor. Required to specify the fate of ventral blastomeres in the early embryo, and postembryonically for the development of the intestine. Directly regulates expression of zygotically expressed med-1 and med-2 to direct mesendoderm development. In response to oxidative stress and anoxia, required to up-regulate expression of stl-1 mRNA. Involved in regulating innate immunity, acting downstream of the pmk-1 p38/MAPK pathway and probably also downstream of nipi-3. Required for the up-regulation of phase II detoxification genes, including gcs-1 and several glutathione-S-transferase mRNAs in response to oxidative stress generated during pathogenic bacterial infection. Modulates oxidative stress responses in concert with transcription factors such as hcf-1 and elt-3. Regulates the transcription of genes associated with metabolism in response to changes in nutrient availability. In neurons, involved in mitochondrial fusion and behavioral recovery during reoxygenation. Required for riok-1 mRNA expression in the intestine. Downstream of the let-60/Ras, mek-2 and pmk-1 pathway, positively regulates lifespan probably by preventing transcription of insulin-like peptides such as ins-39. Prevents degeneration of dopaminergic CEP neurons in response to high Al(3+) or Mn(2+) levels, probably by promoting the expression of glutathione-S-transferase gst-1. Directed by the ER-associated degradation pathway (ERAD), mediates proteasomal homeostasis by regulating the expression of proteasomal subunits such as rpt-3 to confer resistance to proteasomal dysfunction. The chain is Protein skinhead-1 (skn-1) from Caenorhabditis elegans.